The chain runs to 549 residues: uncharacterized protein (549 aa).

Helical transmembrane passes span 1–21, 28–48, 50–70, 85–105, 106–126, 165–185, 187–207, 222–242, 278–298, 310–330, 361–381, and 398–418; these read MEIFFTILIMTLVVSLSGVVT, IPLPLMQIAIGALLAWPTFGL, VEFDPELFLVLFIPPLLFADG, IFGLALALVVVTVVGIGFLIY, WVVPGIPLIPAFALAAVLSPT, FAVAVAMGTMIFTVGGATVEF, KVAIGGILAGFVVSWLYGRSL, IVLLFLLPFASYLIAEHIGVS, LEFVFNGMVFLLLGLQLPGIL, NVEIWMLFTNIILIYAALMLV, ILIASFAGVRGAITLAGVLSI, and VFLAAGVILFSLFVGVVMLPI.

The protein belongs to the monovalent cation:proton antiporter 1 (CPA1) transporter (TC 2.A.36) family.

It is found in the cell inner membrane. This is an uncharacterized protein from Escherichia coli (strain K12).